A 101-amino-acid chain; its full sequence is Apolipoprotein C-III (101 aa).

Positions 1–20 (MQPRMLLIVALVALLASARA) are cleaved as a signal peptide. Methionine 64 carries the post-translational modification Methionine sulfoxide. Positions 69-101 (KSLKGYWSKFTDKFTGLWESGPEDQLTTPTLEP) are lipid-binding. O-linked (GalNAc...) threonine glycosylation occurs at threonine 96.

The protein belongs to the apolipoprotein C3 family. In terms of processing, the most abundant glycoforms are characterized by an O-linked disaccharide galactose linked to N-acetylgalactosamine (Gal-GalNAc), further modified with up to 3 sialic acid residues. Less abundant glycoforms are characterized by more complex and fucosylated glycan moieties. O-glycosylated on Thr-96 with a core 1 or possibly core 8 glycan. Synthesized predominantly in liver and to a lesser degree in intestine.

Its subcellular location is the secreted. Component of triglyceride-rich very low density lipoproteins (VLDL) and high density lipoproteins (HDL) in plasma. Plays a multifaceted role in triglyceride homeostasis. Intracellularly, promotes hepatic very low density lipoprotein 1 (VLDL1) assembly and secretion; extracellularly, attenuates hydrolysis and clearance of triglyceride-rich lipoproteins (TRLs). Impairs the lipolysis of TRLs by inhibiting lipoprotein lipase and the hepatic uptake of TRLs by remnant receptors. Formed of several curved helices connected via semiflexible hinges, so that it can wrap tightly around the curved micelle surface and easily adapt to the different diameters of its natural binding partners. The sequence is that of Apolipoprotein C-III (Apoc3) from Rattus norvegicus (Rat).